Reading from the N-terminus, the 494-residue chain is Guanosine-5'-triphosphate,3'-diphosphate pyrophosphatase (494 aa).

Belongs to the GppA/Ppx family. GppA subfamily.

It catalyses the reaction guanosine 3'-diphosphate 5'-triphosphate + H2O = guanosine 3',5'-bis(diphosphate) + phosphate + H(+). It participates in purine metabolism; ppGpp biosynthesis; ppGpp from GTP: step 2/2. Functionally, catalyzes the conversion of pppGpp to ppGpp. Guanosine pentaphosphate (pppGpp) is a cytoplasmic signaling molecule which together with ppGpp controls the 'stringent response', an adaptive process that allows bacteria to respond to amino acid starvation, resulting in the coordinated regulation of numerous cellular activities. This chain is Guanosine-5'-triphosphate,3'-diphosphate pyrophosphatase, found in Shigella sonnei (strain Ss046).